The sequence spans 325 residues: Tagatose 1,6-diphosphate aldolase 1 (325 aa).

Belongs to the aldolase LacD family.

It catalyses the reaction D-tagatofuranose 1,6-bisphosphate = D-glyceraldehyde 3-phosphate + dihydroxyacetone phosphate. It functions in the pathway carbohydrate metabolism; D-tagatose 6-phosphate degradation; D-glyceraldehyde 3-phosphate and glycerone phosphate from D-tagatose 6-phosphate: step 2/2. This is Tagatose 1,6-diphosphate aldolase 1 (lacD1) from Enterococcus faecalis (strain ATCC 700802 / V583).